We begin with the raw amino-acid sequence, 1247 residues long: Leucine-rich repeat-containing protein 53 (1247 aa).

7 LRR repeats span residues 34–55 (TTRVLIITDGYLSSIESTNLSL), 58–79 (NLALLSLSRNGIEDVQEDALHG), 82–102 (MLRTLLLEHNQISSSSLTDHT), 108–129 (SLQVLVLSNNALRTLRGSWFRN), 132–153 (GLTRLQLDGNQITNLTDSSFGG), 158–179 (SLRYLDLSNNFISYIGKDAFRP), and 182–203 (QLQEVDLSRNRLAHMPDVFTPL). Positions 214 to 271 (NQWSCTCDLHPLARFLRNYIKSSAHTLRNAKDLNCQPSTAAVAAAQSVLRLSETNCDS) constitute an LRRCT domain. The helical transmembrane segment at 294 to 314 (LLTVLGFAGAVGLTCLGLVVF) threads the bilayer. 3 disordered regions span residues 828–866 (SAGHIPDGNTSKLPQPTPTDAEHRHSHSQFSTEQMEDAT), 887–927 (VLPF…SPRN), and 1223–1247 (ENSAPKPVLYPPSAEYATTSPLETE). 2 stretches are compositionally biased toward polar residues: residues 898 to 927 (DQGTTESTEHMGQNVSKTSELNQFSLSPRN) and 1238 to 1247 (YATTSPLETE).

It localises to the membrane. The chain is Leucine-rich repeat-containing protein 53 (LRRC53) from Homo sapiens (Human).